A 185-amino-acid chain; its full sequence is Pycsar effector protein EcPycTM (185 aa).

The next 3 helical transmembrane spans lie at 32 to 52 (ALLLAVNGATATILSNKVGYF), 63 to 83 (MVIFFLLLFMISIFIFMSVLL), and 141 to 161 (FILSCIAKQKFLFFSSAVSWI).

It is found in the cell inner membrane. In terms of biological role, pycsar (pyrimidine cyclase system for antiphage resistance) provides immunity against bacteriophage. The pyrimidine cyclase (PycC) synthesizes cyclic nucleotides in response to infection; these serve as specific second messenger signals. The signals activate the adjacent effector, leading to bacterial cell death and abortive phage infection. A clade E Pycsar system. Functionally, the effector component of a two-gene Pycsar system. Expression of this and adjacent cytidylate cyclase EcPycC (AC P0DV24) confers resistance to bacteriophage P1 and T5; this protein is required for resistance. When cells expressing the Pycsar system are infected by phage T5 at low multiplicity of infection (0.2 MOI) the culture survives, at 2.0 MOI bacteria enter growth arrest. The same cells enter growth arrest after exposure to 250 uM cCMP but not cUMP; this effector protein responds only to cCMP, usually produced by its cognate NTP cyclase. Some of the cells treated with cCMP have abnormal membrane protrusions, probably due to effects on membrane integrity. The protein is Pycsar effector protein EcPycTM of Escherichia coli.